Here is a 588-residue protein sequence, read N- to C-terminus: Aspartate--tRNA ligase (588 aa).

E174 serves as a coordination point for L-aspartate. Positions 198–201 (QLFK) are aspartate. R220 is a binding site for L-aspartate. Residues 220-222 (RDE) and Q229 each bind ATP. H448 contacts L-aspartate. E482 contacts ATP. R489 provides a ligand contact to L-aspartate. Residue 534–537 (GIDR) participates in ATP binding.

The protein belongs to the class-II aminoacyl-tRNA synthetase family. Type 1 subfamily. As to quaternary structure, homodimer.

Its subcellular location is the cytoplasm. The enzyme catalyses tRNA(Asp) + L-aspartate + ATP = L-aspartyl-tRNA(Asp) + AMP + diphosphate. Functionally, catalyzes the attachment of L-aspartate to tRNA(Asp) in a two-step reaction: L-aspartate is first activated by ATP to form Asp-AMP and then transferred to the acceptor end of tRNA(Asp). The polypeptide is Aspartate--tRNA ligase (Xanthomonas euvesicatoria pv. vesicatoria (strain 85-10) (Xanthomonas campestris pv. vesicatoria)).